The following is a 450-amino-acid chain: Protein indeterminate-domain 13 (450 aa).

A Phosphoserine modification is found at S54. C2H2-type zinc fingers lie at residues 64 to 86 and 106 to 136; these read FFCEICNKGFQREQNLQLHKRGH and YICPEKSCVHHDPARALGDLTGIKKHFSRKH. A Nuclear localization signal motif is present at residues 128 to 135; that stretch reads IKKHFSRK. The C2H2-type 2; degenerate zinc finger occupies 141–165; sequence WKCDKCSKKYAVISDWKAHNKICGS. Zn(2+) is bound by residues C143, C146, H159, C163, C170, C172, H185, and C189. Residues 168–191 form a CCHC-type 2; atypical zinc finger; the sequence is FRCDCGTLFSRKDSFISHRSFCDV. An SHR-binding region spans residues 178–190; the sequence is RKDSFISHRSFCD. A compositionally biased stretch (polar residues) spans 248–263; sequence FGQKFTNSNPTQQQPN. Positions 248-280 are disordered; it reads FGQKFTNSNPTQQQPNALALSSPPSPRSTSDSV.

The protein resides in the nucleus. Functionally, probable transcription factor. This is Protein indeterminate-domain 13 from Arabidopsis thaliana (Mouse-ear cress).